We begin with the raw amino-acid sequence, 126 residues long: Aspartate 1-decarboxylase (126 aa).

Ser-25 (schiff-base intermediate with substrate; via pyruvic acid) is an active-site residue. Ser-25 bears the Pyruvic acid (Ser) mark. Substrate is bound at residue Thr-57. Tyr-58 (proton donor) is an active-site residue. A substrate-binding site is contributed by 73–75 (GAA).

It belongs to the PanD family. In terms of assembly, heterooctamer of four alpha and four beta subunits. Pyruvate is required as a cofactor. Is synthesized initially as an inactive proenzyme, which is activated by self-cleavage at a specific serine bond to produce a beta-subunit with a hydroxyl group at its C-terminus and an alpha-subunit with a pyruvoyl group at its N-terminus.

The protein resides in the cytoplasm. It catalyses the reaction L-aspartate + H(+) = beta-alanine + CO2. It functions in the pathway cofactor biosynthesis; (R)-pantothenate biosynthesis; beta-alanine from L-aspartate: step 1/1. Catalyzes the pyruvoyl-dependent decarboxylation of aspartate to produce beta-alanine. The protein is Aspartate 1-decarboxylase of Stutzerimonas stutzeri (strain A1501) (Pseudomonas stutzeri).